The chain runs to 205 residues: Thymidine kinase (205 aa).

Residues 9 to 16 (SAMNAGKS) and 87 to 90 (DESQ) contribute to the ATP site. The Proton acceptor role is filled by Glu88. Residues Cys145, Cys147, Cys182, and His185 each contribute to the Zn(2+) site.

This sequence belongs to the thymidine kinase family. As to quaternary structure, homotetramer.

Its subcellular location is the cytoplasm. It carries out the reaction thymidine + ATP = dTMP + ADP + H(+). The sequence is that of Thymidine kinase from Salmonella choleraesuis (strain SC-B67).